The sequence spans 372 residues: MVAVARGTLRRTPLYEEHRALGARLVDFAGWEMPVQYAGIKAEHEAVRTRAGLFDVSHMGEVAFRGPDAERALQRLLTRDVSRLGEGQAGYAAVCLESGGTVDDVIAYRRGEGFLVVVNAANREKDLAHFRRHTADLDVEISDETEEWALLALQGPEAERLLQPFVAGDLSALGRYRFLETHVDGGEAIVARTGYTGEDGFEVFLRPAEAPSLWRRLVEAGAAPAGLGARDTLRLEAGMCLYGNELDEETTPLEAGISFAVHLHKEEEFVGQRALQRQRERGLRKKLVGFELEGRGIARHGYPVAVGGERAGVVTSGTMSPTLGRAIGLAYVPPETEGGFEVLIRERPVPARIVPLPFYRRKRNDPEGGASG.

It belongs to the GcvT family. In terms of assembly, the glycine cleavage system is composed of four proteins: P, T, L and H.

The enzyme catalyses N(6)-[(R)-S(8)-aminomethyldihydrolipoyl]-L-lysyl-[protein] + (6S)-5,6,7,8-tetrahydrofolate = N(6)-[(R)-dihydrolipoyl]-L-lysyl-[protein] + (6R)-5,10-methylene-5,6,7,8-tetrahydrofolate + NH4(+). In terms of biological role, the glycine cleavage system catalyzes the degradation of glycine. This chain is Aminomethyltransferase, found in Rubrobacter xylanophilus (strain DSM 9941 / JCM 11954 / NBRC 16129 / PRD-1).